The primary structure comprises 662 residues: Transketolase (662 aa).

His28 provides a ligand contact to substrate. Thiamine diphosphate contacts are provided by residues His68 and 115–117 (GPL). Asp156 is a Mg(2+) binding site. Residues Gly157 and Asn186 each contribute to the thiamine diphosphate site. 2 residues coordinate Mg(2+): Asn186 and Ile188. Positions 261, 356, and 383 each coordinate substrate. Residue His261 participates in thiamine diphosphate binding. Residue Glu410 is the Proton donor of the active site. A thiamine diphosphate-binding site is contributed by Phe436. Residues His460, Asp468, and Arg519 each contribute to the substrate site.

The protein belongs to the transketolase family. Homodimer. Mg(2+) serves as cofactor. Ca(2+) is required as a cofactor. Requires Mn(2+) as cofactor. It depends on Co(2+) as a cofactor. The cofactor is thiamine diphosphate.

The enzyme catalyses D-sedoheptulose 7-phosphate + D-glyceraldehyde 3-phosphate = aldehydo-D-ribose 5-phosphate + D-xylulose 5-phosphate. The protein operates within carbohydrate biosynthesis; Calvin cycle. It participates in carbohydrate degradation; pentose phosphate pathway. Catalyzes the transfer of a two-carbon ketol group from a ketose donor to an aldose acceptor, via a covalent intermediate with the cofactor thiamine pyrophosphate. The sequence is that of Transketolase (tkt) from Staphylococcus epidermidis (strain ATCC 12228 / FDA PCI 1200).